Consider the following 743-residue polypeptide: Ectonucleotide pyrophosphatase/phosphodiesterase C27A7.3 (743 aa).

Topologically, residues 1–23 (MSNRVVDVNSKKTGTSWKKKLMK) are cytoplasmic. The chain crosses the membrane as a helical; Signal-anchor for type II membrane protein span at residues 24–44 (IVIWSLAMLSFIAGLVLLGLV). Residues 45 to 743 (AAATISGSKN…LRRNITTSLW (699 aa)) lie on the Lumenal side of the membrane. Zn(2+)-binding residues include D87 and T123. Catalysis depends on T123, which acts as the Nucleophile. Residue N195 is glycosylated (N-linked (GlcNAc...) asparagine). Residues D243, H247, D286, and H287 each contribute to the Zn(2+) site. N-linked (GlcNAc...) asparagine glycosylation is found at N293 and N320. Position 383 (H383) interacts with Zn(2+). N-linked (GlcNAc...) asparagine glycans are attached at residues N406, N434, and N536. Residues D635, N637, D639, I641, and D643 each contribute to the Ca(2+) site. N-linked (GlcNAc...) asparagine glycosylation occurs at N737.

It belongs to the nucleotide pyrophosphatase/phosphodiesterase family. Zn(2+) serves as cofactor. It depends on Ca(2+) as a cofactor.

It localises to the membrane. Functionally, probable phosphodiesterase. In Caenorhabditis elegans, this protein is Ectonucleotide pyrophosphatase/phosphodiesterase C27A7.3.